The sequence spans 192 residues: Peptidyl-tRNA hydrolase (192 aa).

Tyr17 is a tRNA binding site. His22 functions as the Proton acceptor in the catalytic mechanism. TRNA contacts are provided by Phe67, Asn69, and Asn115.

This sequence belongs to the PTH family. As to quaternary structure, monomer.

It is found in the cytoplasm. It carries out the reaction an N-acyl-L-alpha-aminoacyl-tRNA + H2O = an N-acyl-L-amino acid + a tRNA + H(+). In terms of biological role, hydrolyzes ribosome-free peptidyl-tRNAs (with 1 or more amino acids incorporated), which drop off the ribosome during protein synthesis, or as a result of ribosome stalling. Its function is as follows. Catalyzes the release of premature peptidyl moieties from peptidyl-tRNA molecules trapped in stalled 50S ribosomal subunits, and thus maintains levels of free tRNAs and 50S ribosomes. The polypeptide is Peptidyl-tRNA hydrolase (Methylobacillus flagellatus (strain ATCC 51484 / DSM 6875 / VKM B-1610 / KT)).